We begin with the raw amino-acid sequence, 575 residues long: Dihydroxy-acid dehydratase (575 aa).

The segment at 1–25 (MPTTDSARAADIKQPDIKPRSRDVT) is disordered. Over residues 8 to 25 (RAADIKQPDIKPRSRDVT) the composition is skewed to basic and acidic residues. Cys-64 contacts [2Fe-2S] cluster. Asp-96 lines the Mg(2+) pocket. Cys-137 is a [2Fe-2S] cluster binding site. Residues Asp-138 and Lys-139 each coordinate Mg(2+). An N6-carboxylysine modification is found at Lys-139. Cys-214 serves as a coordination point for [2Fe-2S] cluster. Glu-465 lines the Mg(2+) pocket. Ser-491 (proton acceptor) is an active-site residue.

It belongs to the IlvD/Edd family. Homodimer. [2Fe-2S] cluster is required as a cofactor. The cofactor is Mg(2+).

It carries out the reaction (2R)-2,3-dihydroxy-3-methylbutanoate = 3-methyl-2-oxobutanoate + H2O. The enzyme catalyses (2R,3R)-2,3-dihydroxy-3-methylpentanoate = (S)-3-methyl-2-oxopentanoate + H2O. Its pathway is amino-acid biosynthesis; L-isoleucine biosynthesis; L-isoleucine from 2-oxobutanoate: step 3/4. It participates in amino-acid biosynthesis; L-valine biosynthesis; L-valine from pyruvate: step 3/4. Functionally, functions in the biosynthesis of branched-chain amino acids. Catalyzes the dehydration of (2R,3R)-2,3-dihydroxy-3-methylpentanoate (2,3-dihydroxy-3-methylvalerate) into 2-oxo-3-methylpentanoate (2-oxo-3-methylvalerate) and of (2R)-2,3-dihydroxy-3-methylbutanoate (2,3-dihydroxyisovalerate) into 2-oxo-3-methylbutanoate (2-oxoisovalerate), the penultimate precursor to L-isoleucine and L-valine, respectively. This is Dihydroxy-acid dehydratase from Mycobacterium avium (strain 104).